The chain runs to 755 residues: Leucine-rich repeat-containing protein 36 (755 aa).

LRR repeat units follow at residues 51–72 (SLRS…QYLC) and 73–94 (SLQE…SRLQ). The LRRCT domain occupies 107 to 146 (NPVVRKDTDYRLFAVYTLQTLEKLDDRAVRDSERRAAKLH). Disordered regions lie at residues 354 to 374 (GKNY…TTSH) and 448 to 517 (LPPG…PPIS). The span at 356 to 370 (NYREHSIKPSQDKKA) shows a compositional bias: basic and acidic residues. Residues 498–510 (LSSDLGSLHGLSG) are compositionally biased toward low complexity. Positions 601–671 (VESLKQKLVK…ELTQLKRLEE (71 aa)) form a coiled coil. The disordered stretch occupies residues 701–755 (YSGKSLLPPEKSHPLGRSSPFGKSTLSSSSPMVHDTGQYLIQSVSEADPEPSLWS). Residues 721 to 731 (FGKSTLSSSSP) show a composition bias toward polar residues.

The protein is Leucine-rich repeat-containing protein 36 (Lrrc36) of Mus musculus (Mouse).